A 456-amino-acid polypeptide reads, in one-letter code: E3 ubiquitin-protein ligase RNF25 (456 aa).

The region spanning Ser-18–Asn-127 is the RWD domain. The Zn(2+) site is built by Cys-134, Cys-137, Cys-152, His-154, His-157, Cys-160, Cys-195, and Cys-198. The RING-type zinc finger occupies Cys-134–Arg-199. The interval Leu-269–Ser-456 is disordered. A compositionally biased stretch (polar residues) spans Ser-288–Ser-332. 2 stretches are compositionally biased toward basic and acidic residues: residues Ser-364–Asn-388 and Arg-410–Lys-421.

It belongs to the RNF25 family. As to quaternary structure, interacts with UBE2D2, and may also interact with UBE2E1 and UBE2E3. Interacts with RELA/p65. Ubiquitinated; autoubiquitinated. Ubiquitous.

It localises to the cytoplasm. It catalyses the reaction S-ubiquitinyl-[E2 ubiquitin-conjugating enzyme]-L-cysteine + [acceptor protein]-L-lysine = [E2 ubiquitin-conjugating enzyme]-L-cysteine + N(6)-ubiquitinyl-[acceptor protein]-L-lysine.. It functions in the pathway protein modification; protein ubiquitination. E3 ubiquitin-protein ligase that plays a key role in the RNF14-RNF25 translation quality control pathway, a pathway that takes place when a ribosome has stalled during translation, and which promotes ubiquitination and degradation of translation factors on stalled ribosomes. Catalyzes ubiquitination of RPS27A in response to ribosome collisions, promoting activation of RNF14. RNF25 catalyzes ubiquitination of other ribosomal proteins on stalled ribosomes, such as RPL0, RPL1, RPL12, RPS13 and RPS17. Also involved in ubiquitination and degradation of stalled ETF1/eRF1. Independently of its function in the response to stalled ribosomes, mediates ubiquitination and subsequent proteasomal degradation of NKD2. May also stimulate transcription mediated by NF-kappa-B via its interaction with RELA/p65. This Mus musculus (Mouse) protein is E3 ubiquitin-protein ligase RNF25.